A 405-amino-acid chain; its full sequence is Ubiquitin-like modifier-activating enzyme 5 (405 aa).

Residues 1 to 44 (MATVEELQTRVKQLEEELERERTRNRGGTDGGGGRKKIDQMSSE) form a disordered region. Residues 7–24 (LQTRVKQLEEELERERTR) are compositionally biased toward basic and acidic residues. 5 residues coordinate ATP: Gly-81, Asp-102, Lys-125, Asn-148, and Asn-182. Residues Cys-224 and Cys-227 each coordinate Zn(2+). Cys-248 acts as the Glycyl thioester intermediate in catalysis. Positions 301 and 306 each coordinate Zn(2+). Positions 346–377 (AETTEEELKAASHGHVPELVEGVHVAYVRPMT) are linker. The UFC1-binding sequence (UFC) signature appears at 390 to 405 (DDQESLEDLMAKMKSI).

This sequence belongs to the ubiquitin-activating E1 family. UBA5 subfamily. In terms of assembly, homodimer; homodimerization is required for UFM1 activation. Interacts (via UIS motif) with UFM1; binds UFM1 via a trans-binding mechanism in which UFM1 interacts with distinct sites in both subunits of the UBA5 homodimer. Interacts (via C-terminus) with UFC1.

It localises to the cytoplasm. The protein localises to the nucleus. The protein resides in the endoplasmic reticulum membrane. Its subcellular location is the golgi apparatus. E1-like enzyme which specifically catalyzes the first step in ufmylation. Activates UFM1 by first adenylating its C-terminal glycine residue with ATP, and thereafter linking this residue to the side chain of a cysteine residue in E1, yielding a UFM1-E1 thioester and free AMP. Activates UFM1 via a trans-binding mechanism, in which UFM1 interacts with distinct sites in both subunits of the UBA5 homodimer. Trans-binding also promotes stabilization of the UBA5 homodimer, and enhances ATP-binding. Transfer of UFM1 from UBA5 to the E2-like enzyme UFC1 also takes place using a trans mechanism. In Branchiostoma floridae (Florida lancelet), this protein is Ubiquitin-like modifier-activating enzyme 5.